Consider the following 349-residue polypeptide: N-acetyl-gamma-glutamyl-phosphate reductase (349 aa).

Residue Cys-153 is part of the active site.

Belongs to the NAGSA dehydrogenase family. Type 1 subfamily.

The protein localises to the cytoplasm. The enzyme catalyses N-acetyl-L-glutamate 5-semialdehyde + phosphate + NADP(+) = N-acetyl-L-glutamyl 5-phosphate + NADPH + H(+). It functions in the pathway amino-acid biosynthesis; L-arginine biosynthesis; N(2)-acetyl-L-ornithine from L-glutamate: step 3/4. Functionally, catalyzes the NADPH-dependent reduction of N-acetyl-5-glutamyl phosphate to yield N-acetyl-L-glutamate 5-semialdehyde. The sequence is that of N-acetyl-gamma-glutamyl-phosphate reductase from Magnetococcus marinus (strain ATCC BAA-1437 / JCM 17883 / MC-1).